A 305-amino-acid polypeptide reads, in one-letter code: Aquaporin NIP6-1 (305 aa).

Positions 1 to 30 (MDHEEIPSTPSTPATTPGTPGAPLFGGFEG) are disordered. Residues 7 to 23 (PSTPSTPATTPGTPGAP) show a composition bias toward low complexity. 2 helical membrane-spanning segments follow: residues 82–102 (LGAE…TAIV) and 111–131 (TLIG…LSTG). The NPA 1 signature appears at 139–141 (NPA). A run of 3 helical transmembrane segments spans residues 159 to 179 (VYIG…KAVF), 194 to 214 (LSQA…VVTA), and 221 to 241 (AVGE…ILIA). The NPA 2 motif lies at 250-252 (NPV). The helical transmembrane segment at 267–287 (IWVYLTAPILGALIGAGTYTI) threads the bilayer. A Phosphoserine modification is found at serine 302.

This sequence belongs to the MIP/aquaporin (TC 1.A.8) family. NIP (TC 1.A.8.12) subfamily. In terms of tissue distribution, expressed in roots.

The protein resides in the membrane. In terms of biological role, transports glycerol, urea and formamide, in Xenopus laevis oocytes. Very low water transport activity. In Arabidopsis thaliana (Mouse-ear cress), this protein is Aquaporin NIP6-1 (NIP6-1).